The primary structure comprises 450 residues: Protein tweety homolog 1 (450 aa).

The Extracellular portion of the chain corresponds to 1–43 (MGAPPGYRPSAWVHLLHQLPRADFQLRPVPSVFAPQEQEYQQA). The helical transmembrane segment at 44–64 (LLLVAALAGLGLGLSLIFIAV) threads the bilayer. Residues 65-88 (YLIRFCCCRPPEPPGSKIPSPGGG) are Cytoplasmic-facing. Residues 89 to 109 (CVTWSCIVALLAGCTGIGIGF) traverse the membrane as a helical segment. Over 110–214 (YGNSETSDGV…NVSFVEEYRW (105 aa)) the chain is Extracellular. Residues Asn-130 and Asn-205 are each glycosylated (N-linked (GlcNAc...) asparagine). A helical membrane pass occupies residues 215–235 (LAYVLLLLLELLVCLFTLLGL). The Cytoplasmic segment spans residues 236–240 (AKQSK). The chain crosses the membrane as a helical span at residues 241–261 (WLVIVMTVMSLLVLVLSWGSM). The Extracellular portion of the chain corresponds to 262–390 (GLEAATAVGL…LRGLCEDALE (129 aa)). 2 disulfides stabilise this stretch: Cys-275-Cys-385 and Cys-303-Cys-370. N-linked (GlcNAc...) asparagine glycosylation is found at Asn-284 and Asn-355. Residues 391-411 (GLLFLLLFSLLSAGALATALC) form a helical membrane-spanning segment. At 412–450 (SLPRAWALFPPSDDYDDTDDDDPFNPQESKRFVQWQSSI) the chain is on the cytoplasmic side. Residues 428–450 (DTDDDDPFNPQESKRFVQWQSSI) are disordered. Ser-440 carries the phosphoserine modification.

This sequence belongs to the tweety family. Homotetramer; disulfide-linked. Homodimer. Post-translationally, N-glycosylated. Contains high-mannose, hybrid and complex oligosaccharides. In terms of tissue distribution, expressed in brain, eye, ovary and testis, and at lower levels in muscle, placenta, liver and lung.

The protein resides in the cell membrane. The catalysed reaction is chloride(in) = chloride(out). The enzyme catalyses L-glutamate(out) = L-glutamate(in). Functionally, calcium-independent, swelling-dependent volume-regulated anion channel (VRAC-swell) which plays a pivotal role in the process of regulatory volume decrease (RVD) in the brain through the efflux of anions like chloride and organic osmolytes like glutamate. In terms of biological role, ca(2+)-independent, swelling-activated chloride channel, possibly involved in regulation of cell volume. The sequence is that of Protein tweety homolog 1 (TTYH1) from Homo sapiens (Human).